We begin with the raw amino-acid sequence, 452 residues long: MLTLQEVVETIKMVQEENLDIRTITMGISLRDCADPNPRAARQKIYDKITRLAGNLVKTGEEIEREYGLPIVNKRISVTPIAIVAESCNTGNFADFARTLDEAAAAVGVNFIGGFSALVHKGFTAADHRLIDSIPEALATTERVCSSVNVATTKAGINMDAVYRMGHIIKKTAELTADRDSIGCAKLVVFANVPEDNPFMAGAFHGVGEPECVINVGVSGPGVVKNAVRTAKGADFGVLAETVKKTAFKITRMGELVGRTAARKLGVPFGIVDISLAPTPAVGDSVAEILECMGLERCGTHGTTAALALLNDAVKKGGAMASSYVGGLSGAFIPVSEDAGMIRAAEAGSLTLDKLEALTCVCSVGLDMIAVPGDTPPETIAAIIADEAAIGIINKKTTAVRLIPAAGKKAGDYVEFGGLLGRAPVMPVKPFSAGEFVRRGGRIPAPINSLTN.

Belongs to the UPF0210 family. Homodimer.

This is UPF0210 protein PTH_0987 from Pelotomaculum thermopropionicum (strain DSM 13744 / JCM 10971 / SI).